We begin with the raw amino-acid sequence, 166 residues long: Protein adg1 (166 aa).

The N-terminal stretch at 1–22 (MFLRSIFQTLCAVSFLAGSVFA) is a signal peptide.

It localises to the endoplasmic reticulum. The protein is Protein adg1 (adg1) of Schizosaccharomyces pombe (strain 972 / ATCC 24843) (Fission yeast).